The primary structure comprises 388 residues: Processive diacylglycerol beta-glucosyltransferase (388 aa).

This sequence belongs to the glycosyltransferase 28 family. UgtP subfamily.

The protein resides in the cell membrane. It carries out the reaction a 1,2-diacyl-3-O-(beta-D-glucopyranosyl)-sn-glycerol + UDP-alpha-D-glucose = a 1,2-diacyl-3-O-(beta-D-Glc-(1-&gt;6)-beta-D-Glc)-sn-glycerol + UDP + H(+). The enzyme catalyses a 1,2-diacyl-3-O-(beta-D-Glc-(1-&gt;6)-beta-D-Glc)-sn-glycerol + UDP-alpha-D-glucose = a 1,2-diacyl-3-O-(beta-D-Glc-(1-&gt;6)-beta-D-Glc-(1-&gt;6)-beta-D-Glc)-sn-glycerol + UDP + H(+). The catalysed reaction is a 1,2-diacyl-sn-glycerol + UDP-alpha-D-glucose = a 1,2-diacyl-3-O-(beta-D-glucopyranosyl)-sn-glycerol + UDP + H(+). It functions in the pathway glycolipid metabolism; diglucosyl-diacylglycerol biosynthesis. In terms of biological role, processive glucosyltransferase involved in the biosynthesis of both the bilayer- and non-bilayer-forming membrane glucolipids. Is able to successively transfer up to three glucosyl residues to diacylglycerol (DAG), thereby catalyzing the formation of beta-monoglucosyl-DAG (3-O-(beta-D-glucopyranosyl)-1,2-diacyl-sn-glycerol), beta-diglucosyl-DAG (3-O-(beta-D-glucopyranosyl-beta-(1-&gt;6)-D-glucopyranosyl)-1,2-diacyl-sn-glycerol) and beta-triglucosyl-DAG (3-O-(beta-D-glucopyranosyl-beta-(1-&gt;6)-D-glucopyranosyl-beta-(1-&gt;6)-D-glucopyranosyl)-1,2-diacyl-sn-glycerol). Beta-diglucosyl-DAG is the predominant glycolipid found in Bacillales and is also used as a membrane anchor for lipoteichoic acid (LTA). This Bacillus anthracis (strain A0248) protein is Processive diacylglycerol beta-glucosyltransferase.